The primary structure comprises 133 residues: MPFKRFVEIGRVALINYGKDYGRLVVIVDVIDQTRALVDAPDMERSPINFKRLSLTDLKIDIKRVPKKKDLIKALEAADVKNKWAKSSWGRKLIVKKTRAALNDFDRFKIMLAKIKRAAGVRQELAKLKKTAA.

This sequence belongs to the eukaryotic ribosomal protein eL14 family.

This Pisum sativum (Garden pea) protein is Large ribosomal subunit protein eL14.